The primary structure comprises 297 residues: uncharacterized protein (297 aa).

Transmembrane regions (helical) follow at residues 14 to 34, 55 to 75, 81 to 101, 110 to 130, 135 to 155, 163 to 183, and 208 to 228; these read LFLM…FLKF, LLLG…IYFF, FYFG…AGAL, AIIL…RVAF, LSTL…KLLF, IVGA…YGSI, and LIMT…SKCF.

It localises to the cell membrane. This is an uncharacterized protein from Methanocaldococcus jannaschii (strain ATCC 43067 / DSM 2661 / JAL-1 / JCM 10045 / NBRC 100440) (Methanococcus jannaschii).